A 201-amino-acid chain; its full sequence is Recombination protein RecR (201 aa).

A C4-type zinc finger spans residues 60–75; the sequence is CKVCGNIDTQNPCTVC. One can recognise a Toprim domain in the interval 83–178; the sequence is SIIVVVADVA…KVTRLAHGVP (96 aa).

It belongs to the RecR family.

In terms of biological role, may play a role in DNA repair. It seems to be involved in an RecBC-independent recombinational process of DNA repair. It may act with RecF and RecO. The protein is Recombination protein RecR of Rhodopseudomonas palustris (strain BisB18).